Reading from the N-terminus, the 76-residue chain is U-scoloptoxin(15)-Ssd3b (76 aa).

Residues 1–23 form the signal peptide; the sequence is MEKKIIFLCFLVALLTFPEFISS.

In terms of processing, contains 2 disulfide bonds. Expressed by the venom gland.

The protein localises to the secreted. This is U-scoloptoxin(15)-Ssd3b from Scolopendra dehaani (Thai centipede).